A 466-amino-acid polypeptide reads, in one-letter code: 3-isopropylmalate dehydratase large subunit (466 aa).

[4Fe-4S] cluster-binding residues include Cys-347, Cys-407, and Cys-410.

This sequence belongs to the aconitase/IPM isomerase family. LeuC type 1 subfamily. Heterodimer of LeuC and LeuD. It depends on [4Fe-4S] cluster as a cofactor.

The enzyme catalyses (2R,3S)-3-isopropylmalate = (2S)-2-isopropylmalate. It functions in the pathway amino-acid biosynthesis; L-leucine biosynthesis; L-leucine from 3-methyl-2-oxobutanoate: step 2/4. Functionally, catalyzes the isomerization between 2-isopropylmalate and 3-isopropylmalate, via the formation of 2-isopropylmaleate. This chain is 3-isopropylmalate dehydratase large subunit, found in Serratia proteamaculans (strain 568).